The primary structure comprises 220 residues: DNA replication complex GINS protein SLD5 (220 aa).

It belongs to the GINS4/SLD5 family. Component of the GINS complex. Interacts with EOL1 in the nucleus.

The protein resides in the nucleus. The GINS complex plays an essential role in the initiation of DNA replication. Required during embryogenesis. The chain is DNA replication complex GINS protein SLD5 from Arabidopsis thaliana (Mouse-ear cress).